We begin with the raw amino-acid sequence, 234 residues long: Putative gustatory receptor clone PTE38 (234 aa).

Residues 1-11 (MYLFFSNLSFN) form a helical membrane-spanning segment. The Extracellular segment spans residues 12–42 (DICIITTTIPKMLMNVQSHDQSITYLGCLSQ). C39 and C121 are joined by a disulfide. A helical membrane pass occupies residues 43 to 62 (VYLIVNFGSIESCLLAVMAY). Residues 63 to 84 (DRYVAICHPLKYTVIMNHYFCV) are Cytoplasmic-facing. A helical transmembrane segment spans residues 85–105 (MLLLFACSLALHMCLFHILMV). At 106–138 (LILTFCTKTEIPHFFCELAHIIKLTCSDNFINY) the chain is on the extracellular side. A helical membrane pass occupies residues 139–160 (LLIYTVSVLFFGVHIVGIILSY). Residues 161–182 (IYTVSSVLRMSLLGGMYKAFST) are Cytoplasmic-facing. The helical transmembrane segment at 183–202 (CGSHLSVVSLFYGTGFGVHI) threads the bilayer. The Extracellular portion of the chain corresponds to 203–212 (SSPLTDSPRK). Residues 213 to 234 (TVVASVMYTVVTQMHGPFIYSL) form a helical membrane-spanning segment.

Belongs to the G-protein coupled receptor 1 family. Tongue specific.

It is found in the cell membrane. Its function is as follows. Possible taste receptor. This chain is Putative gustatory receptor clone PTE38, found in Rattus norvegicus (Rat).